The chain runs to 611 residues: MNVQLPIKDAIGAIPTGERPGSRKVYQAGSLFPDIRVPFREVAVHPSANEPPVTIYDPSGPYTDPHAKIDIEQGLERSREPWIIARGDCELVATPREVKPEDNGFAQGKHLAPQFTAKRPIFKGAQGKLVTQLEYARAGIVTAEMEYVAIRENLRREQDRPCVRDGEDFGASIPDFVTPEFVRQEVARGRAIIPANINHGELEPMAIGRNFLVKINANIGNSAVLSTVADEVDKLVWATRWGADTVMDLSTGRNIHNIRDWIIRNSPVPIGTVPIYQALEKVNGVAEDLNWEVFRDTLIEQAEQGVDYFTIHAGVRLPFIPLTAKRVTGIVSRGGSIMAKWCLAHHKENFLYERFEDICEIMRSYDVSFSLGDGLRPGSTADANDEAQFAELRTLGELTKVAWKHGVQVMIEGPGHVAMHKIKANMDEQLKHCHEAPFYTLGPLTTDIAPGYDHITSAIGAAMIGWFGTAMLCYVTPKEHLGLPDRDDVKTGVITYKLAAHAADLAKGHPGAAMWDDAISRARFEFRWEDQFNLGLDPETARAFHDETLPKEAHKTAHFCSMCGPKFCSMKISQEVREFAAGMAPNSIEQGMAEMSDKFREQGSEIYLKTE.

Substrate-binding positions include asparagine 218, methionine 247, tyrosine 276, histidine 312, 332-334 (SRG), 373-376 (DGLR), and glutamate 412. A Zn(2+)-binding site is contributed by histidine 416. Residue tyrosine 439 participates in substrate binding. Residue histidine 480 coordinates Zn(2+). Residues cysteine 560, cysteine 563, and cysteine 568 each contribute to the [4Fe-4S] cluster site.

The protein belongs to the ThiC family. In terms of assembly, homodimer. [4Fe-4S] cluster serves as cofactor.

The catalysed reaction is 5-amino-1-(5-phospho-beta-D-ribosyl)imidazole + S-adenosyl-L-methionine = 4-amino-2-methyl-5-(phosphooxymethyl)pyrimidine + CO + 5'-deoxyadenosine + formate + L-methionine + 3 H(+). Its pathway is cofactor biosynthesis; thiamine diphosphate biosynthesis. In terms of biological role, catalyzes the synthesis of the hydroxymethylpyrimidine phosphate (HMP-P) moiety of thiamine from aminoimidazole ribotide (AIR) in a radical S-adenosyl-L-methionine (SAM)-dependent reaction. The chain is Phosphomethylpyrimidine synthase from Caulobacter sp. (strain K31).